The following is a 315-amino-acid chain: Methionyl-tRNA formyltransferase (315 aa).

112-115 (SLLP) is a (6S)-5,6,7,8-tetrahydrofolate binding site.

This sequence belongs to the Fmt family.

The enzyme catalyses L-methionyl-tRNA(fMet) + (6R)-10-formyltetrahydrofolate = N-formyl-L-methionyl-tRNA(fMet) + (6S)-5,6,7,8-tetrahydrofolate + H(+). Attaches a formyl group to the free amino group of methionyl-tRNA(fMet). The formyl group appears to play a dual role in the initiator identity of N-formylmethionyl-tRNA by promoting its recognition by IF2 and preventing the misappropriation of this tRNA by the elongation apparatus. In Leptospira interrogans serogroup Icterohaemorrhagiae serovar copenhageni (strain Fiocruz L1-130), this protein is Methionyl-tRNA formyltransferase.